The chain runs to 551 residues: mRNA cap guanine-N(7) methyltransferase (551 aa).

The segment covering 1–10 (MENRSSSGTP) has biased composition (polar residues). Positions 1–152 (MENRSSSGTP…DRETLRRRQE (152 aa)) are disordered. Basic and acidic residues-rich tracts occupy residues 48–76 (VTEE…EERH) and 141–152 (LVDRETLRRRQE). The mRNA cap 0 methyltransferase domain maps to 194–551 (SKIKGLRSFN…FYHAFCFYKV (358 aa)). 203-204 (NN) lines the mRNA pocket. Residues K207, G250, D274, D312, 355–357 (MFA), and Y360 each bind S-adenosyl-L-methionine. The interval 407–430 (KAREEQEKKEKSDEAPEDGEVEED) is disordered. Over residues 408–420 (AREEQEKKEKSDE) the composition is skewed to basic and acidic residues. Residues 421–430 (APEDGEVEED) are compositionally biased toward acidic residues.

This sequence belongs to the class I-like SAM-binding methyltransferase superfamily. mRNA cap 0 methyltransferase family.

Its subcellular location is the nucleus. The catalysed reaction is a 5'-end (5'-triphosphoguanosine)-ribonucleoside in mRNA + S-adenosyl-L-methionine = a 5'-end (N(7)-methyl 5'-triphosphoguanosine)-ribonucleoside in mRNA + S-adenosyl-L-homocysteine. Responsible for methylating the 5'-cap structure of mRNAs. This Aspergillus clavatus (strain ATCC 1007 / CBS 513.65 / DSM 816 / NCTC 3887 / NRRL 1 / QM 1276 / 107) protein is mRNA cap guanine-N(7) methyltransferase (abd1).